Consider the following 360-residue polypeptide: DNA replication and repair protein RecF (360 aa).

30-37 serves as a coordination point for ATP; that stretch reads GHNGSGKT.

It belongs to the RecF family.

It localises to the cytoplasm. In terms of biological role, the RecF protein is involved in DNA metabolism; it is required for DNA replication and normal SOS inducibility. RecF binds preferentially to single-stranded, linear DNA. It also seems to bind ATP. In Actinobacillus pleuropneumoniae serotype 5b (strain L20), this protein is DNA replication and repair protein RecF.